Reading from the N-terminus, the 189-residue chain is Casparian strip membrane protein 1 (189 aa).

The Cytoplasmic portion of the chain corresponds to 1–42; that stretch reads MEKNESSAIEIAESSKERKGKAPLLAAAVGHDRAAGYKRGVS. Residues 43–63 traverse the membrane as a helical segment; the sequence is IFDLILRISAATAALAATIVM. At 64-90 the chain is on the extracellular side; the sequence is GTTEQTLPFFTQFFQFRAQYDDLPTFT. Residues 91–111 form a helical membrane-spanning segment; that stretch reads FFVVGMAIVTGYLILSVPLSI. Residues 112-130 lie on the Cytoplasmic side of the membrane; it reads VCIARPVAIGPRFLLIVCD. The chain crosses the membrane as a helical span at residues 131-151; that stretch reads TVTAVLATSAAGSSAAIVYLA. At 152–189 the chain is on the extracellular side; it reads HNGNSDANWLAICQQFNDFCQRVSGAVVAAFVAVVCSS.

The protein belongs to the Casparian strip membrane proteins (CASP) family. As to quaternary structure, homodimer and heterodimers.

The protein localises to the cell membrane. In terms of biological role, regulates membrane-cell wall junctions and localized cell wall deposition. Required for establishment of the Casparian strip membrane domain (CSD) and the subsequent formation of Casparian strips, a cell wall modification of the root endodermis that determines an apoplastic barrier between the intraorganismal apoplasm and the extraorganismal apoplasm and prevents lateral diffusion. The chain is Casparian strip membrane protein 1 from Striga asiatica (Asiatic witchweed).